The following is a 167-amino-acid chain: Small ribosomal subunit protein uS9 (167 aa).

The segment at 136–167 (KRAGFLTRDPRATERKKYGLKKARKAPQYSKR) is disordered. Positions 143-152 (RDPRATERKK) are enriched in basic and acidic residues. Residues 153–167 (YGLKKARKAPQYSKR) show a composition bias toward basic residues.

This sequence belongs to the universal ribosomal protein uS9 family.

In Nocardia farcinica (strain IFM 10152), this protein is Small ribosomal subunit protein uS9.